The following is a 305-amino-acid chain: Small ribosomal subunit biogenesis GTPase RsgA (305 aa).

The CP-type G domain occupies 67–224; that stretch reads SSELVRPAVA…VADTPGFSSF (158 aa). Residues 116-119 and 166-174 each bind GTP; these read NKID and GQSGVGKST. Zn(2+) contacts are provided by cysteine 248, cysteine 253, histidine 255, and cysteine 261.

It belongs to the TRAFAC class YlqF/YawG GTPase family. RsgA subfamily. As to quaternary structure, monomer. Associates with 30S ribosomal subunit, binds 16S rRNA. Zn(2+) serves as cofactor.

The protein resides in the cytoplasm. In terms of biological role, one of several proteins that assist in the late maturation steps of the functional core of the 30S ribosomal subunit. Helps release RbfA from mature subunits. May play a role in the assembly of ribosomal proteins into the subunit. Circularly permuted GTPase that catalyzes slow GTP hydrolysis, GTPase activity is stimulated by the 30S ribosomal subunit. In Ruminiclostridium cellulolyticum (strain ATCC 35319 / DSM 5812 / JCM 6584 / H10) (Clostridium cellulolyticum), this protein is Small ribosomal subunit biogenesis GTPase RsgA.